Here is a 131-residue protein sequence, read N- to C-terminus: Profilin-5 (131 aa).

This sequence belongs to the profilin family. As to quaternary structure, occurs in many kinds of cells as a complex with monomeric actin in a 1:1 ratio.

The protein resides in the cytoplasm. The protein localises to the cytoskeleton. Binds to actin and affects the structure of the cytoskeleton. At high concentrations, profilin prevents the polymerization of actin, whereas it enhances it at low concentrations. By binding to PIP2, it inhibits the formation of IP3 and DG. The protein is Profilin-5 of Hevea brasiliensis (Para rubber tree).